A 615-amino-acid chain; its full sequence is AP-1-like transcription factor yap1 (615 aa).

Over residues 27-50 the composition is skewed to polar residues; the sequence is SSNNPTQKQQTVTHNSEANQNLNH. 2 disordered regions span residues 27-84 and 99-180; these read SSNN…EDSP and NESL…RKEK. The Bipartite nuclear localization signal motif lies at 35–42; it reads QQTVTHNS. A compositionally biased stretch (low complexity) spans 52-67; it reads PGHASSGSFSVSPPSG. The short motif at 68 to 75 is the Bipartite nuclear localization signal element; that stretch reads LDGSVNQS. Over residues 118-147 the composition is skewed to basic and acidic residues; the sequence is PGDKRKDIDGQVNDKEDSGKKRRESDEKAA. The region spanning 157 to 220 is the bZIP domain; that stretch reads SEPTSKRKAQ…ERLQLELKEY (64 aa). Residues 162-183 form a basic motif region; that stretch reads KRKAQNRAAQRAFRERKEKHLK. The interval 185 to 192 is leucine-zipper; sequence LEAKVEEL. The tract at residues 214–364 is transcription activation 1; that stretch reads QLELKEYRKR…RGYQVNSSYS (151 aa). The span at 270–294 shows a compositional bias: polar residues; that stretch reads LFTNTQTSKSNQNKAKDNPTATPRS. Residues 270–416 are disordered; it reads LFTNTQTSKS…AVKATESSTP (147 aa). Positions 289-301 are n-CRD; it reads TATPRSEAQVPGV. The segment covering 310–321 has biased composition (low complexity); that stretch reads SSPNGLSNGPSP. Polar residues-rich tracts occupy residues 322–344 and 358–369; these read AKST…SGTL and QVNSSYSASTKQ. Over residues 372–394 the composition is skewed to low complexity; sequence HDTPSSDSPSSSSDSHQSQLLSS. Residues 409–508 form a transcription activation 2 region; the sequence is KATESSTPHA…SQDFGTFFDD (100 aa). Disulfide bonds link Cys562-Cys586, Cys562-Cys595, and Cys586-Cys595. The tract at residues 562-595 is c-CRD; that stretch reads CNKIWDRLQSMEKFRNGEIDVDNLCSELRTKARC. Residues 580–587 carry the Nuclear export signal motif; it reads IDVDNLCS.

This sequence belongs to the bZIP family. YAP subfamily. Depending on the oxidative stress inducing agent, yap1 can undergo two distinct conformational changes, both involving disulfide bond formation, and both masking the nuclear export signal, thus abolishing nuclear export.

The protein localises to the nucleus. The protein resides in the cytoplasm. Transcription activator involved in oxidative stress response and redox homeostasis. Regulates the transcription of genes encoding antioxidant enzymes and components of the cellular thiol-reducing pathways, including thioredoxin peroxidase (aspF3), cytochrome peroxidase, and the protein AFUA_3G00730, which appears to belong to the glutathione S-transferase family. Proteins of the protein degradation pathway are also regulated by yap1, as well the p-nitroreductase family protein AFUA_5G09910. May be involved in antifungal resistance to voriconazole. The sequence is that of AP-1-like transcription factor yap1 from Aspergillus fumigatus (strain ATCC MYA-4609 / CBS 101355 / FGSC A1100 / Af293) (Neosartorya fumigata).